A 241-amino-acid chain; its full sequence is Phosphatidylglycerophosphatase B (241 aa).

The chain crosses the membrane as a helical span at residues 1-21 (MFKRLSLYTLLLCLVPFFIWG). Residues 22–52 (ISYQWHGNSQLTQADYWLYLLTETGSVPYAL) are Periplasmic-facing. A helical membrane pass occupies residues 53–62 (ITCVLFTLLF). Over 63 to 67 (AFLFK) the chain is Cytoplasmic. A helical membrane pass occupies residues 68–91 (NPKQWILGVIVMGISVIATQAAKT). Topologically, residues 92–158 (GAKALFEEPR…ENETGYSFPS (67 aa)) are periplasmic. The tract at residues 94 to 102 (KALFEEPRP) is phosphatase sequence motif I. Positions 157–160 (PSGH) are phosphatase sequence motif II. The chain crosses the membrane as a helical span at residues 159–173 (GHTIFAATWLMLAVG). His-160 acts as the Proton donor; for a subset of substrates in catalysis. Residues 174–184 (FTQLLGNRSFK) are Cytoplasmic-facing. The chain crosses the membrane as a helical span at residues 185 to 204 (AKLLVVGIAVWGLLMLISRV). The tract at residues 202–213 (SRVRLGMHYPID) is phosphatase sequence motif III. Over 205 to 210 (RLGMHY) the chain is Periplasmic. His-209 serves as the catalytic Nucleophile. The chain crosses the membrane as a helical span at residues 211–235 (PIDLLVATLLAWLINSIIFAFLKKK). Over 236 to 241 (AIFVMK) the chain is Cytoplasmic.

This sequence belongs to the PA-phosphatase related phosphoesterase family.

It is found in the cell inner membrane. The protein resides in the cell outer membrane. The enzyme catalyses a 1,2-diacyl-sn-glycero-3-phospho-(1'-sn-glycero-3'-phosphate) + H2O = a 1,2-diacyl-sn-glycero-3-phospho-(1'-sn-glycerol) + phosphate. It carries out the reaction a 1,2-diacyl-sn-glycerol 3-diphosphate + H2O = a 1,2-diacyl-sn-glycero-3-phosphate + phosphate + H(+). It catalyses the reaction a 1,2-diacyl-sn-glycero-3-phosphate + H2O = a 1,2-diacyl-sn-glycerol + phosphate. The catalysed reaction is di-trans,octa-cis-undecaprenyl diphosphate + H2O = di-trans,octa-cis-undecaprenyl phosphate + phosphate + H(+). It participates in phospholipid metabolism; phosphatidylglycerol biosynthesis; phosphatidylglycerol from CDP-diacylglycerol: step 2/2. Functionally, catalyzes the dephosphorylation of diacylglycerol diphosphate (DGPP) to phosphatidate (PA) and the subsequent dephosphorylation of PA to diacylglycerol (DAG). Also has undecaprenyl pyrophosphate phosphatase activity, required for the biosynthesis of the lipid carrier undecaprenyl phosphate. Can also use lysophosphatidic acid (LPA) and phosphatidylglycerophosphate as substrates. The pattern of activities varies according to subcellular location, PGP phosphatase activity is higher in the cytoplasmic membrane, whereas PA and LPA phosphatase activities are higher in the outer membrane. Activity is independent of a divalent cation ion and insensitive to inhibition by N-ethylmaleimide. This is Phosphatidylglycerophosphatase B (pgpB) from Haemophilus influenzae (strain ATCC 51907 / DSM 11121 / KW20 / Rd).